The sequence spans 209 residues: Amelotin (209 aa).

The signal sequence occupies residues 1-16; it reads MRSTILLFCLLGSTRS. The interval 142-209 is disordered; that stretch reads AGANPDVQDG…ATTESANGIQ (68 aa).

This sequence belongs to the amelotin family. Phosphorylated by FAM20C in vitro. Post-translationally, O-glycosylated.

It localises to the secreted. Functionally, is a promoter of calcium phosphate mineralization, playing a critical role in the formation of the compact, mineralized, aprismatic enamel surface layer during the maturation stage of amelogenesis. This chain is Amelotin (AMTN), found in Homo sapiens (Human).